We begin with the raw amino-acid sequence, 210 residues long: MLLWGRWKLAAGLAGLALSLELFYRYMRRRKPLREVLFFPVPVTCIEPVLSPMKQCSCPLPHTDSAFSRLLVQLLGAQRSLELCVFTFSSPSLARALLILHRRDVRVRVITDNDYMAAPGSQIGPLRSAGVAVRHDQSSGYMHHKFAVVDGTVVLTGSLNWTVQAFQSNKENILITDDTVIVKAYQKEFERLWEEYDPATYNFFPEKENK.

The Mitochondrial intermembrane portion of the chain corresponds to 1–5; that stretch reads MLLWG. Residues 6–24 form a helical membrane-spanning segment; sequence RWKLAAGLAGLALSLELFY. Residues 25 to 210 are Cytoplasmic-facing; sequence RYMRRRKPLR…YNFFPEKENK (186 aa). The region spanning 138–165 is the PLD phosphodiesterase domain; sequence SSGYMHHKFAVVDGTVVLTGSLNWTVQA. Residues H143, K145, and D150 contribute to the active site.

It belongs to the phospholipase D family. MitoPLD/Zucchini subfamily. Homodimer.

It is found in the mitochondrion outer membrane. It carries out the reaction a cardiolipin + H2O = a 1,2-diacyl-sn-glycero-3-phospho-(1'-sn-glycerol) + a 1,2-diacyl-sn-glycero-3-phosphate + H(+). Functionally, presents phospholipase and nuclease activities, depending on the different physiological conditions. Plays a key role in mitochondrial fusion and fission via its phospholipase activity. In its phospholipase role, it uses the mitochondrial lipid cardiolipin as substrate to generate phosphatidate (PA or 1,2-diacyl-sn-glycero-3-phosphate), a second messenger signaling lipid. Production of PA facilitates Mitofusin-mediated fusion, whereas the cleavage of PA by the Lipin family of phosphatases produces diacylgycerol (DAG) which promotes mitochondrial fission. Regulates mitochondrial shape through facilitating mitochondrial fusion. During spermatogenesis, plays a critical role in PIWI-interacting RNA (piRNA) biogenesis. piRNAs provide essential protection against the activity of mobile genetic elements. piRNA-mediated transposon silencing is thus critical for maintaining genome stability, in particular in germline cells when transposons are mobilized as a consequence of wide-spread genomic demethylation. Has been shown to be a backbone-non-specific, single strand-specific nuclease, cleaving either RNA or DNA substrates with similar affinity. Produces 5' phosphate and 3' hydroxyl termini, suggesting it could directly participate in the processing of primary piRNA transcripts. Has been proposed to act as a cardiolipin hydrolase to generate phosphatidic acid at mitochondrial surface. Although it cannot be excluded that it can act as a phospholipase in some circumstances, this activity could not be confirmed. The protein is Mitochondrial cardiolipin hydrolase (pld6) of Xenopus laevis (African clawed frog).